The chain runs to 149 residues: Small ribosomal subunit protein uS13 (149 aa).

Residues 118 to 149 are disordered; the sequence is GRRHELGLPVRGQRTKSTFRKGSSVGVRRKKR.

Belongs to the universal ribosomal protein uS13 family. Part of the 30S ribosomal subunit. Forms a loose heterodimer with protein S19. Forms two bridges to the 50S subunit in the 70S ribosome.

Located at the top of the head of the 30S subunit, it contacts several helices of the 16S rRNA. In the 70S ribosome it contacts the 23S rRNA (bridge B1a) and protein L5 of the 50S subunit (bridge B1b), connecting the 2 subunits; these bridges are implicated in subunit movement. The chain is Small ribosomal subunit protein uS13 from Methanothermobacter thermautotrophicus (strain ATCC 29096 / DSM 1053 / JCM 10044 / NBRC 100330 / Delta H) (Methanobacterium thermoautotrophicum).